The chain runs to 409 residues: Elongation factor Tu (409 aa).

The region spanning 10–214 (KPHVNVGTIG…AVDSYIPTPE (205 aa)) is the tr-type G domain. The interval 19-26 (GHVDHGKT) is G1. 19 to 26 (GHVDHGKT) lines the GTP pocket. Mg(2+) is bound at residue threonine 26. The segment at 60-64 (GITIN) is G2. The interval 81–84 (DCPG) is G3. Residues 81–85 (DCPGH) and 136–139 (NKAD) each bind GTP. The interval 136–139 (NKAD) is G4. The interval 174-176 (SAL) is G5.

It belongs to the TRAFAC class translation factor GTPase superfamily. Classic translation factor GTPase family. EF-Tu/EF-1A subfamily. As to quaternary structure, monomer.

It is found in the cytoplasm. The catalysed reaction is GTP + H2O = GDP + phosphate + H(+). GTP hydrolase that promotes the GTP-dependent binding of aminoacyl-tRNA to the A-site of ribosomes during protein biosynthesis. In Synechococcus sp. (strain JA-2-3B'a(2-13)) (Cyanobacteria bacterium Yellowstone B-Prime), this protein is Elongation factor Tu.